The following is a 388-amino-acid chain: Outer membrane protein assembly factor BamB (388 aa).

Positions 1–17 (MVLSLLSVMLLSGYKFL) are cleaved as a signal peptide.

It belongs to the BamB family. Part of the Bam complex, which is composed of the outer membrane protein BamA, and four lipoproteins BamB, BamC, BamD and BamE.

It is found in the cell outer membrane. In terms of biological role, part of the outer membrane protein assembly complex, which is involved in assembly and insertion of beta-barrel proteins into the outer membrane. This Moranella endobia (strain PCIT) protein is Outer membrane protein assembly factor BamB.